The chain runs to 249 residues: UPF0246 protein EUBREC_1226 (249 aa).

This sequence belongs to the UPF0246 family.

This chain is UPF0246 protein EUBREC_1226, found in Agathobacter rectalis (strain ATCC 33656 / DSM 3377 / JCM 17463 / KCTC 5835 / VPI 0990) (Eubacterium rectale).